A 263-amino-acid polypeptide reads, in one-letter code: 3-methyl-2-oxobutanoate hydroxymethyltransferase (263 aa).

2 residues coordinate Mg(2+): aspartate 44 and aspartate 83. 3-methyl-2-oxobutanoate contacts are provided by residues 44–45, aspartate 83, and lysine 112; that span reads DS. Glutamate 114 provides a ligand contact to Mg(2+). Glutamate 181 acts as the Proton acceptor in catalysis.

The protein belongs to the PanB family. Homodecamer; pentamer of dimers. Requires Mg(2+) as cofactor.

Its subcellular location is the cytoplasm. It catalyses the reaction 3-methyl-2-oxobutanoate + (6R)-5,10-methylene-5,6,7,8-tetrahydrofolate + H2O = 2-dehydropantoate + (6S)-5,6,7,8-tetrahydrofolate. Its pathway is cofactor biosynthesis; (R)-pantothenate biosynthesis; (R)-pantoate from 3-methyl-2-oxobutanoate: step 1/2. Catalyzes the reversible reaction in which hydroxymethyl group from 5,10-methylenetetrahydrofolate is transferred onto alpha-ketoisovalerate to form ketopantoate. This Sulfurimonas denitrificans (strain ATCC 33889 / DSM 1251) (Thiomicrospira denitrificans (strain ATCC 33889 / DSM 1251)) protein is 3-methyl-2-oxobutanoate hydroxymethyltransferase.